A 654-amino-acid chain; its full sequence is Acetyl-coenzyme A synthetase (654 aa).

CoA-binding positions include 190–193 (RGGK) and T313. ATP contacts are provided by residues 389–391 (GEP), 413–418 (DTWWQT), D504, and R519. Position 527 (S527) interacts with CoA. R530 contacts ATP. 3 residues coordinate Mg(2+): V541, H543, and V546. K613 is subject to N6-acetyllysine.

It belongs to the ATP-dependent AMP-binding enzyme family. Mg(2+) is required as a cofactor. Post-translationally, acetylated. Deacetylation by the SIR2-homolog deacetylase activates the enzyme.

It carries out the reaction acetate + ATP + CoA = acetyl-CoA + AMP + diphosphate. In terms of biological role, catalyzes the conversion of acetate into acetyl-CoA (AcCoA), an essential intermediate at the junction of anabolic and catabolic pathways. AcsA undergoes a two-step reaction. In the first half reaction, AcsA combines acetate with ATP to form acetyl-adenylate (AcAMP) intermediate. In the second half reaction, it can then transfer the acetyl group from AcAMP to the sulfhydryl group of CoA, forming the product AcCoA. This chain is Acetyl-coenzyme A synthetase, found in Leptospira biflexa serovar Patoc (strain Patoc 1 / Ames).